The primary structure comprises 202 residues: Regulator of G-protein signaling 16 (202 aa).

S-palmitoyl cysteine attachment occurs at residues Cys2 and Cys12. The region spanning 65-181 (SFDLLLSSKN…LKSPAYRDLA (117 aa)) is the RGS domain. Tyr168 carries the phosphotyrosine; by EGFR modification. Position 177 is a phosphotyrosine (Tyr177). Residues 183–202 (QATAASASPSSSSPAEPLHT) form a disordered region.

Interacts with GNAI1 and GNAQ. Interacts with GNAI3, GNAI3 and GNAO1. Post-translationally, palmitoylated on Cys-2 and/or Cys-12. In terms of processing, phosphorylated. Phosphorylation at Tyr-168 by EGFR enhances GTPase accelerating (GAP) activity toward GNAI1.

The protein resides in the membrane. In terms of biological role, regulates G protein-coupled receptor signaling cascades. Inhibits signal transduction by increasing the GTPase activity of G protein alpha subunits, thereby driving them into their inactive GDP-bound form. Plays an important role in the phototransduction cascade by regulating the lifetime and effective concentration of activated transducin alpha. May regulate extra and intracellular mitogenic signals. The sequence is that of Regulator of G-protein signaling 16 (RGS16) from Bos taurus (Bovine).